The primary structure comprises 485 residues: Glutamyl-tRNA(Gln) amidotransferase subunit A (485 aa).

Residues Lys79 and Ser154 each act as charge relay system in the active site. Ser178 acts as the Acyl-ester intermediate in catalysis.

The protein belongs to the amidase family. GatA subfamily. As to quaternary structure, heterotrimer of A, B and C subunits.

It carries out the reaction L-glutamyl-tRNA(Gln) + L-glutamine + ATP + H2O = L-glutaminyl-tRNA(Gln) + L-glutamate + ADP + phosphate + H(+). Functionally, allows the formation of correctly charged Gln-tRNA(Gln) through the transamidation of misacylated Glu-tRNA(Gln) in organisms which lack glutaminyl-tRNA synthetase. The reaction takes place in the presence of glutamine and ATP through an activated gamma-phospho-Glu-tRNA(Gln). The protein is Glutamyl-tRNA(Gln) amidotransferase subunit A of Geobacillus kaustophilus (strain HTA426).